We begin with the raw amino-acid sequence, 278 residues long: Tryptophan synthase alpha chain (278 aa).

Catalysis depends on proton acceptor residues glutamate 49 and aspartate 60.

The protein belongs to the TrpA family. In terms of assembly, tetramer of two alpha and two beta chains.

It catalyses the reaction (1S,2R)-1-C-(indol-3-yl)glycerol 3-phosphate + L-serine = D-glyceraldehyde 3-phosphate + L-tryptophan + H2O. It participates in amino-acid biosynthesis; L-tryptophan biosynthesis; L-tryptophan from chorismate: step 5/5. Functionally, the alpha subunit is responsible for the aldol cleavage of indoleglycerol phosphate to indole and glyceraldehyde 3-phosphate. This is Tryptophan synthase alpha chain from Rhodopirellula baltica (strain DSM 10527 / NCIMB 13988 / SH1).